Consider the following 561-residue polypeptide: 65 kDa phosphoprotein (561 aa).

Disordered regions lie at residues 389 to 475 (DEGA…SDNE) and 534 to 561 (AAQPKRRRHRQDALPGPCIASTPKKHRG). Residues 395 to 411 (GDDDVWTSGSDSDEELV) show a composition bias toward acidic residues. A compositionally biased stretch (low complexity) spans 440–449 (ASSATACTSG). The segment covering 464-473 (PEEDTDEDSD) has biased composition (acidic residues). Ser-472 is modified (phosphoserine). The short motif at 537 to 560 (PKRRRHRQDALPGPCIASTPKKHR) is the Bipartite nuclear localization signal element.

This sequence belongs to the herpesviridae pp65 family. As to quaternary structure, interacts with host NCL/nucleolin. Interacts with host IFI16. Interacts with host CGAS; this interaction inhibits CGAS enzymatic activity. In terms of processing, phosphorylation may play a role in the localization of the protein.

Its subcellular location is the virion tegument. The protein resides in the host nucleus. It localises to the host cytoplasm. Its function is as follows. Counteracts the host antiviral immune response when activated and phosphorylated, by preventing host IRF3 from entering the nucleus. Also inhibits the type I interferon production by inactivating the enzymatic activity of DNA sensor CGAS without affecting STING1. Participates in the transactivation of viral major immediate-early genes by the recruitment of host IFI16 to the promoters pf these genes. This is 65 kDa phosphoprotein (UL83) from Human cytomegalovirus (strain AD169) (HHV-5).